Reading from the N-terminus, the 371-residue chain is Thyroid transcription factor 1 (371 aa).

A DNA-binding region (homeobox) is located at residues 161 to 220 (RRKRRVLFSQAQVYELERRFKQQKYLSAPEREHLASMIHLTPTQVKIWFQNHRYKMKRQA). 2 disordered regions span residues 219–294 (QAKD…QQQA) and 308–342 (SGGP…ALQG). The span at 233-243 (SGGGGGGGGAG) shows a compositional bias: gly residues. Composition is skewed to low complexity over residues 244-253 (CPQQQQAQQQ) and 272-294 (AGAP…QQQA).

It belongs to the NK-2 homeobox family. Phosphorylated on serine residues. Thyroid, lung and CNS.

It is found in the nucleus. Its function is as follows. Transcription factor that binds and activates the promoter of thyroid specific genes such as thyroglobulin, thyroperoxidase, and thyrotropin receptor. Crucial in the maintenance of the thyroid differentiation phenotype. May play a role in lung development and surfactant homeostasis. In Canis lupus familiaris (Dog), this protein is Thyroid transcription factor 1 (TITF1).